A 359-amino-acid chain; its full sequence is 4-galactosyl-N-acetylglucosaminide 3-alpha-L-fucosyltransferase 9 (359 aa).

At 1–11 (MTSTSKGILRP) the chain is on the cytoplasmic side. A helical; Signal-anchor for type II membrane protein membrane pass occupies residues 12–32 (FLIVCIILGCFMACLLIYIKP). Topologically, residues 33–359 (TNSWIFSPME…VGNLEKWFWN (327 aa)) are lumenal. Asn-62 carries an N-linked (GlcNAc...) asparagine glycan. The acceptor-binding stretch occupies residues 63 to 168 (ETTILVWVWP…RRDSDIQVPY (106 aa)). Gln-75 contacts a beta-D-galactosyl-(1-&gt;4)-N-acetyl-beta-D-glucosaminyl derivative. Cystine bridges form between Cys-82/Cys-335, Cys-91/Cys-338, and Cys-190/Cys-238. An N-linked (GlcNAc...) asparagine glycan is attached at Asn-101. Residue Glu-137 coordinates a beta-D-galactosyl-(1-&gt;4)-N-acetyl-beta-D-glucosaminyl derivative. Residue Glu-137 is the Nucleophile of the active site. Glu-137 contributes to the GDP-beta-L-fucose binding site. The N-linked (GlcNAc...) asparagine glycan is linked to Asn-153. Positions 168, 192, 194, 195, 202, 226, 241, 246, 252, 255, and 256 each coordinate GDP-beta-L-fucose. The segment at 169 to 326 (GFLTVSTNPF…NWRKDFTVNL (158 aa)) is donor-binding. The acceptor-binding stretch occupies residues 327–359 (PRFWESHACLACDHVKRHQEYKSVGNLEKWFWN).

The protein belongs to the glycosyltransferase 10 family. In terms of assembly, homodimer. In terms of processing, N-glycosylated with complex-type N-glycans. The glycan alpha-D-Man-(1-&gt;3)-beta-D-Man-(1-&gt;4)-GlcNAc-(1-&gt;4)-GlcNAc is attached at Asn-153. As to expression, strongly expressed in forebrain and stomach, lower expression in spleen and peripheral blood leukocytes, and no expression in small intestine, colon, liver, lung, kidney, adrenal cortex or uterus. Highly expressed in granulocytes. Not expressed in monocytes.

Its subcellular location is the golgi apparatus. The protein localises to the trans-Golgi network membrane. It localises to the golgi apparatus membrane. The catalysed reaction is a beta-D-galactosyl-(1-&gt;4)-N-acetyl-beta-D-glucosaminyl derivative + GDP-beta-L-fucose = a beta-D-galactosyl-(1-&gt;4)-[alpha-L-fucosyl-(1-&gt;3)]-N-acetyl-beta-D-glucosaminyl derivative + GDP + H(+). It carries out the reaction an alpha-Neu5Ac-(2-&gt;3)-beta-D-Gal-(1-&gt;4)-beta-D-GlcNAc-(1-&gt;3)-beta-D-Gal-(1-&gt;4)-beta-D-GlcNAc derivative + GDP-beta-L-fucose = an alpha-Neu5Ac-(2-&gt;3)-beta-D-Gal-(1-&gt;4)-beta-D-GlcNAc-(1-&gt;3)-beta-D-Gal-(1-&gt;4)-[alpha-L-Fuc-(1-&gt;3)]-beta-D-GlcNAc derivative + GDP + H(+). It catalyses the reaction alpha-N-glycoloylneuraminosyl-(2-&gt;3)-beta-D-galactosyl-(1-&gt;4)-N-acetyl-beta-D-glucosaminyl-(1-&gt;3)-beta-D-galactosyl-(1-&gt;4)-N-acetyl-beta-D-glucosaminyl-(1-&gt;3)-beta-D-galactosyl-(1-&gt;4)-beta-D-glucosyl-(1&lt;-&gt;1')-ceramide + GDP-beta-L-fucose = alpha-N-glycoloylneuraminosyl-(2-&gt;3)-beta-D-galactosyl-(1-&gt;4)-N-acetyl-beta-D-glucosaminyl-(1-&gt;3)-beta-D-galactosyl-(1-&gt;4)-[alpha-L-fucosyl-(1-&gt;3)]-N-acetyl-beta-D-glucosaminyl-(1-&gt;3)-beta-D-galactosyl-(1-&gt;4)-beta-D-glucosyl-(1&lt;-&gt;1')-ceramide + GDP + H(+). The enzyme catalyses alpha-D-galactosyl-(1-&gt;3)-beta-D-galactosyl-(1-&gt;4)-N-acetyl-beta-D-glucosaminyl-(1-&gt;3)-beta-D-galactosyl-(1-&gt;4)-beta-D-glucosyl-(1&lt;-&gt;1')-ceramide + GDP-beta-L-fucose = a neolactoside IV(3)-alpha-Gal,III(3)-alpha-Fuc-nLc4Cer + GDP + H(+). The catalysed reaction is a neolactoside nLc4Cer + GDP-beta-L-fucose = a neolactoside III(3)-alpha-Fuc-nLc4Cer + GDP + H(+). It carries out the reaction an N-acetyl-alpha-neuraminyl-(2-&gt;3)-beta-D-galactosyl-(1-&gt;4)-N-acetyl-beta-D-glucosaminyl derivative + GDP-beta-L-fucose = an alpha-Neu5Ac-(2-&gt;3)-beta-D-Gal-(1-&gt;4)-[alpha-L-Fuc-(1-&gt;3)]-beta-D-GlcNAc derivative + GDP + H(+). It catalyses the reaction beta-D-Gal-(1-&gt;4)-beta-D-GlcNAc-(1-&gt;3)-beta-D-Gal-(1-&gt;4)-D-Glc + GDP-beta-L-fucose = beta-D-Gal-(1-&gt;4)-[alpha-L-Fuc-(1-&gt;3)]-beta-D-GlcNAc-(1-&gt;3)-beta-D-Gal-(1-&gt;4)-D-Glc + GDP + H(+). The enzyme catalyses an alpha-L-Fuc-(1-&gt;2)-beta-D-Gal-(1-&gt;4)-beta-D-GlcNAc derivative + GDP-beta-L-fucose = an alpha-L-Fuc-(1-&gt;2)-beta-D-Gal-(1-&gt;4)-[alpha-L-Fuc-(1-&gt;3)]-beta-D-GlcNAc derivative + GDP + H(+). The protein operates within protein modification; protein glycosylation. It participates in glycolipid biosynthesis. Its activity is regulated as follows. Activated by Mn2+. Its function is as follows. Catalyzes alpha(1-&gt;3) linkage of fucosyl moiety transferred from GDP-beta-L-fucose to N-acetyl glucosamine (GlcNAc) within type 2 lactosamine (LacNAc, beta-D-Gal-(1-&gt;4)-beta-D-GlcNAc-) glycan attached to glycolipids and N- or O-linked glycoproteins. Fucosylates distal type 2 LacNAc and its fucosylated (H-type 2 LacNAc) and sialylated (sialyl-type 2 LacNAc) derivatives to form Lewis x (Lex) (CD15) and Lewis y (Ley) antigenic epitopes involved in cell adhesion and differentiation. Generates Lex epitopes in the brain, presumably playing a role in the maintenance of neuronal stemness and neurite outgrowth in progenitor neural cells. Fucosylates the internal type 2 LacNAc unit of the polylactosamine chain to form VIM-2 antigen that serves as recognition epitope for SELE. Can also modify milk oligosaccharides, in particular type 2 tetrasaccharide LNnT. This chain is 4-galactosyl-N-acetylglucosaminide 3-alpha-L-fucosyltransferase 9, found in Homo sapiens (Human).